We begin with the raw amino-acid sequence, 379 residues long: Multicilin (379 aa).

Disordered regions lie at residues 26-46 and 87-106; these read SRRSLGKPGKPERKFVPPWKS and LLGTEAPPSGDSPASQNPSL. The stretch at 175–223 forms a coiled coil; that stretch reads EQYWKEVADQNQRALGTALIENNQLHVTLTQKQEEIASLRERNVQLKEL. The segment covering 289–309 has biased composition (basic and acidic residues); sequence LQNRDPKRPRLQQEPDSKDCS. The tract at residues 289 to 311 is disordered; sequence LQNRDPKRPRLQQEPDSKDCSTR.

It belongs to the geminin family. Heterodimer (via coiled-coil domain) with GMNN (via coiled-coil domain); targets GMNN to the nucleus. Can form homodimers (in vitro, via coiled-coil domain), but these are much less stable than the heterodimer formed with GMNN.

The protein resides in the nucleus. Its function is as follows. Transcription regulator specifically required for multiciliate cell differentiation. Acts in a multiprotein complex containing E2F4 and E2F5 that binds and activates genes required for centriole biogenesis. Required for the deuterosome-mediated acentriolar pathway. Plays a role in mitotic cell cycle progression by promoting cell cycle exit. Modulates GMNN activity by reducing its affinity for CDT1. This Rattus norvegicus (Rat) protein is Multicilin (Mcidas).